Here is a 944-residue protein sequence, read N- to C-terminus: Putative ATP-dependent RNA helicase (944 aa).

Positions 66 to 235 (TTPRSPIDGI…VPLHNLLMKL (170 aa)) constitute a Helicase ATP-binding domain. Residue 79-86 (HGVGTGKT) participates in ATP binding. Positions 183 to 186 (DEAH) match the DEAH box motif. A Helicase C-terminal domain is found at 451 to 523 (CLTREVMTVP…QIIGRGIRYQ (73 aa)).

This sequence belongs to the DEAD box helicase family. DEAH subfamily.

It catalyses the reaction ATP + H2O = ADP + phosphate + H(+). This is Putative ATP-dependent RNA helicase from Heliothis virescens ascovirus 3e (HvAV-3e).